The following is a 579-amino-acid chain: Protein downstream neighbor of son homolog (579 aa).

2 disordered regions span residues Met1–Pro68 and Phe331–Phe379. The span at Asp339–Glu348 shows a compositional bias: basic and acidic residues. Acidic residues predominate over residues Glu365–Ser378.

The protein belongs to the DONSON family. As to quaternary structure, component of the replisome complex.

Its subcellular location is the nucleus. Its function is as follows. Replisome component that maintains genome stability by protecting stalled or damaged replication forks. After the induction of replication stress, required for the stabilization of stalled replication forks, the efficient activation of the intra-S-phase and G/2M cell-cycle checkpoints and the maintenance of genome stability. The polypeptide is Protein downstream neighbor of son homolog (Xenopus laevis (African clawed frog)).